The chain runs to 347 residues: MLKKSDFHYDLPEELIAQGPLPERSASRLMLVPSAPEQFQDCYVRDLPELLQPGDLLVFNDTRVIPARLFGRKVSGGRVEILIERFLGTHQAVVQLRTSRSLKVGNRILLDAGGHAGVLGRDGDFYLLSFDVESPLEQWLSDVGQLPLPPYIHREPDEYDRERYQTVFARAVGAVAAPTAGLHFDESLLARLRARGVEFGYITLHVGAGTFQPVRVALLQQHVMHSEWFKVGAELVEQVRSARARGGRVIAVGTTVVRSLESAMRHGELQPFVGETQIFIFPGYCIRSVDAMVTNFHLPESTLLMLVAAFAGRTRILDAYYHAVQQRYRFFSYGDAMLLFPRNAGEQ.

This sequence belongs to the QueA family. Monomer.

It is found in the cytoplasm. The enzyme catalyses 7-aminomethyl-7-carbaguanosine(34) in tRNA + S-adenosyl-L-methionine = epoxyqueuosine(34) in tRNA + adenine + L-methionine + 2 H(+). It participates in tRNA modification; tRNA-queuosine biosynthesis. Transfers and isomerizes the ribose moiety from AdoMet to the 7-aminomethyl group of 7-deazaguanine (preQ1-tRNA) to give epoxyqueuosine (oQ-tRNA). The polypeptide is S-adenosylmethionine:tRNA ribosyltransferase-isomerase (Xylella fastidiosa (strain 9a5c)).